Reading from the N-terminus, the 200-residue chain is ATP-dependent Clp protease proteolytic subunit (200 aa).

Ser-99 serves as the catalytic Nucleophile. His-124 is a catalytic residue.

This sequence belongs to the peptidase S14 family. Fourteen ClpP subunits assemble into 2 heptameric rings which stack back to back to give a disk-like structure with a central cavity, resembling the structure of eukaryotic proteasomes.

Its subcellular location is the cytoplasm. It catalyses the reaction Hydrolysis of proteins to small peptides in the presence of ATP and magnesium. alpha-casein is the usual test substrate. In the absence of ATP, only oligopeptides shorter than five residues are hydrolyzed (such as succinyl-Leu-Tyr-|-NHMec, and Leu-Tyr-Leu-|-Tyr-Trp, in which cleavage of the -Tyr-|-Leu- and -Tyr-|-Trp bonds also occurs).. In terms of biological role, cleaves peptides in various proteins in a process that requires ATP hydrolysis. Has a chymotrypsin-like activity. Plays a major role in the degradation of misfolded proteins. The polypeptide is ATP-dependent Clp protease proteolytic subunit (Syntrophomonas wolfei subsp. wolfei (strain DSM 2245B / Goettingen)).